Reading from the N-terminus, the 436-residue chain is Histidine--tRNA ligase (436 aa).

The protein belongs to the class-II aminoacyl-tRNA synthetase family. Homodimer.

The protein resides in the cytoplasm. The catalysed reaction is tRNA(His) + L-histidine + ATP = L-histidyl-tRNA(His) + AMP + diphosphate + H(+). This Prochlorococcus marinus (strain MIT 9313) protein is Histidine--tRNA ligase.